The following is a 404-amino-acid chain: Glycosyltransferase GlyB (404 aa).

The GT8 domain stretch occupies residues 1–267 (MNTKSIVFNA…ILLRKDIISR (267 aa)). UDP is bound by residues 9–14 (NADNDY) and 103–104 (DS). 3 residues coordinate Mn(2+): Asp103, Asp105, and His228. UDP is bound at residue 228-233 (HYTGVK).

This sequence in the N-terminal section; belongs to the glycosyltransferase 8 family.

Its function is as follows. May be involved in the polymorphic O-glycosylation of the serine-rich repeat protein PsrP. Has equal hydrolytic activity against both UDP-galactose and UDP-glucose; no glycosyltransferase activity has been seen with tested substrates. The protein is Glycosyltransferase GlyB of Streptococcus pneumoniae serotype 4 (strain ATCC BAA-334 / TIGR4).